Consider the following 189-residue polypeptide: EELFCRTMHGVIKNIAHLCKRDRSKTWGKEGWKKVVVCIVSDGRQKINSRTLSVIAAMGRHQDGIAKNVVNKKPVTAHIYEYTTQITVTPSMKIEGAERGTMPVQLIFCLKEKNQKKINSHRWFFNAFGPILQPNVCVLLDVGTMPGPTSIYHLWKAFDINSNVGGACGEIVALKGKWGLNLLNPLVAA.

It belongs to the chitin synthase family.

Its subcellular location is the cell membrane. The catalysed reaction is [(1-&gt;4)-N-acetyl-beta-D-glucosaminyl](n) + UDP-N-acetyl-alpha-D-glucosamine = [(1-&gt;4)-N-acetyl-beta-D-glucosaminyl](n+1) + UDP + H(+). In terms of biological role, polymerizes chitin, a structural polymer of the cell wall and septum, by transferring the sugar moiety of UDP-GlcNAc to the non-reducing end of the growing chitin polymer. The sequence is that of Chitin synthase 1 (CHS1) from Schizophyllum commune (Split gill fungus).